Here is a 122-residue protein sequence, read N- to C-terminus: Large ribosomal subunit protein bL12 (122 aa).

The protein belongs to the bacterial ribosomal protein bL12 family. Homodimer. Part of the ribosomal stalk of the 50S ribosomal subunit. Forms a multimeric L10(L12)X complex, where L10 forms an elongated spine to which 2 to 4 L12 dimers bind in a sequential fashion. Binds GTP-bound translation factors.

Functionally, forms part of the ribosomal stalk which helps the ribosome interact with GTP-bound translation factors. Is thus essential for accurate translation. The protein is Large ribosomal subunit protein bL12 of Blochmanniella pennsylvanica (strain BPEN).